A 458-amino-acid chain; its full sequence is V-type ATP synthase beta chain (458 aa).

It belongs to the ATPase alpha/beta chains family.

Functionally, produces ATP from ADP in the presence of a proton gradient across the membrane. The V-type beta chain is a regulatory subunit. The protein is V-type ATP synthase beta chain of Fusobacterium nucleatum subsp. nucleatum (strain ATCC 25586 / DSM 15643 / BCRC 10681 / CIP 101130 / JCM 8532 / KCTC 2640 / LMG 13131 / VPI 4355).